The following is a 340-amino-acid chain: Glycerol-3-phosphate dehydrogenase [NAD(P)+] (340 aa).

NADPH is bound by residues Ser-13, Tyr-14, and Lys-108. Positions 108, 137, and 139 each coordinate sn-glycerol 3-phosphate. Position 141 (Ala-141) interacts with NADPH. Lys-193, Asp-246, Ser-256, Arg-257, and Asn-258 together coordinate sn-glycerol 3-phosphate. Lys-193 functions as the Proton acceptor in the catalytic mechanism. Position 257 (Arg-257) interacts with NADPH. Ile-281 and Glu-283 together coordinate NADPH.

Belongs to the NAD-dependent glycerol-3-phosphate dehydrogenase family.

The protein resides in the cytoplasm. It carries out the reaction sn-glycerol 3-phosphate + NAD(+) = dihydroxyacetone phosphate + NADH + H(+). The enzyme catalyses sn-glycerol 3-phosphate + NADP(+) = dihydroxyacetone phosphate + NADPH + H(+). It participates in membrane lipid metabolism; glycerophospholipid metabolism. Catalyzes the reduction of the glycolytic intermediate dihydroxyacetone phosphate (DHAP) to sn-glycerol 3-phosphate (G3P), the key precursor for phospholipid synthesis. The sequence is that of Glycerol-3-phosphate dehydrogenase [NAD(P)+] from Bartonella henselae (strain ATCC 49882 / DSM 28221 / CCUG 30454 / Houston 1) (Rochalimaea henselae).